Reading from the N-terminus, the 214-residue chain is Adenylate kinase (214 aa).

10–15 (GAGKGT) is an ATP binding site. The NMP stretch occupies residues 30–59 (STGDMLRAAVKSGSELGKQAKDIMDAGKLV). AMP contacts are provided by residues Thr-31, Arg-36, 57 to 59 (KLV), 85 to 88 (GFPR), and Gln-92. The LID stretch occupies residues 122–159 (GRRVHAPSGRVYHVKFNPPKVEGKDDVTGEELTTRKDD). ATP is bound by residues Arg-123 and 132–133 (VY). Positions 156 and 167 each coordinate AMP. The residue at position 192 (Lys-192) is an N6-acetyllysine. Residue Lys-200 participates in ATP binding.

It belongs to the adenylate kinase family. As to quaternary structure, monomer.

The protein resides in the cytoplasm. It catalyses the reaction AMP + ATP = 2 ADP. Its pathway is purine metabolism; AMP biosynthesis via salvage pathway; AMP from ADP: step 1/1. Its function is as follows. Catalyzes the reversible transfer of the terminal phosphate group between ATP and AMP. Plays an important role in cellular energy homeostasis and in adenine nucleotide metabolism. This chain is Adenylate kinase, found in Escherichia coli O45:K1 (strain S88 / ExPEC).